The following is a 299-amino-acid chain: B3 domain-containing transcription factor NGA2 (299 aa).

The tract at residues 1–21 (MNQEDKEKPIEEASSSMEREH) is disordered. Positions 23 to 129 (FDKVVTPSDV…KLYIDWRRRP (107 aa)) form a DNA-binding region, TF-B3. The segment at 226 to 249 (GGGGSVNSTEEESSSSGGSIPRGR) is disordered.

The protein resides in the nucleus. Regulates lateral organ growth. Functionally redundant with NGA1, NGA3 and NGA4. The polypeptide is B3 domain-containing transcription factor NGA2 (NGA2) (Arabidopsis thaliana (Mouse-ear cress)).